Reading from the N-terminus, the 98-residue chain is Small ribosomal subunit protein uS19 (98 aa).

Residues 77 to 98 (TRTYRGHAGGKSEKGGSAPRKK) form a disordered region.

It belongs to the universal ribosomal protein uS19 family.

Its function is as follows. Protein S19 forms a complex with S13 that binds strongly to the 16S ribosomal RNA. This is Small ribosomal subunit protein uS19 from Chlorobium phaeobacteroides (strain BS1).